A 443-amino-acid polypeptide reads, in one-letter code: Amino-acid acetyltransferase (443 aa).

The N-acetyltransferase domain maps to 296–436 (EQIRRATIND…KMYNYQRRSK (141 aa)).

Belongs to the acetyltransferase family. ArgA subfamily. Homohexamer.

It localises to the cytoplasm. It carries out the reaction L-glutamate + acetyl-CoA = N-acetyl-L-glutamate + CoA + H(+). The protein operates within amino-acid biosynthesis; L-arginine biosynthesis; N(2)-acetyl-L-ornithine from L-glutamate: step 1/4. This Salmonella arizonae (strain ATCC BAA-731 / CDC346-86 / RSK2980) protein is Amino-acid acetyltransferase.